A 221-amino-acid chain; its full sequence is Probable septum site-determining protein MinC (221 aa).

It belongs to the MinC family. Interacts with MinD and FtsZ.

Functionally, cell division inhibitor that blocks the formation of polar Z ring septums. Rapidly oscillates between the poles of the cell to destabilize FtsZ filaments that have formed before they mature into polar Z rings. Prevents FtsZ polymerization. The polypeptide is Probable septum site-determining protein MinC (Aliivibrio salmonicida (strain LFI1238) (Vibrio salmonicida (strain LFI1238))).